The following is a 1167-amino-acid chain: MKNWTAEQMRAITSRGNALLVSAAAGAGKTSVLVERVLSRVLTDTPPVDIDRLLVVTFTEAAAGEMKERLGTELLKRLNEDPGNSRILEQLELLPVADISTLHSFCHKIIRKYGRVCGYETKFAILEGPRETYLKNKVLEEILEERYEKGDRELFALLEYLNDEKNDRNLKELILNLYHFSRSNPEPEKWLLDSLNLFNGNWERFEDTFWYREIKSSTEMWLEYILELLGRAKSVAEKYGQARAFSLLAEDMEKVRGLYAKLNEGYEAAKQYLSQVKFGTFSWGRGVGGKDEAKDLRDKAKEQFETIKKRYFSWEAGNFREELRTLTSYLDPLVKLVREFSRKYQEEKRKHGFADFSDLEHWALDILKSGVYRELREKYVEILVDEYQDINGLQEEILTYVSRDGQNLFMVGDVKQSIYRFRWARPEIFLKKYEDFTDEKKIELSLNFRSREEIIATVNFIFKQIMKKRVAELSYDEKAFLKKGADYLPNANCFAELHLIEGKPEEDINSNGEPEEDLTAVHREARLVAAKILKLKEEGFKVFDRETKEFRPLQYRDIVILSRSLSNSSNIWQEELTRAGIPVYVEGAGSFLNSKEILLMTSFLKVIDNPCQDVPLAAVLCSPVAGLTYEELWQVRKEYPEGLLYDALKNKSLGKDELSVKSQKFLELLVEFQKLSRQISLAELVNEIYRKTNLPEIFGAYPGGEVRQANLKLLHDLAVDFAEINGGGIYNFLTFLSQAAESEDFSPAKLIGEADDVVRVMSVHKSKGLEFPVVFVVGLGKRFKFDYSNTVFLHSDLGFGPKFFDPEKRIRRHSIASQILSERMRRETLAEEMRILYVALTRAREKLILVGTVKNLAKKMAGWQSQTEALKDTLSDGQIARAGNFLDWIGPVVFREGSDLPDCLKVEVHPQQEKIEGEQWELPEVLRVKLLTKTPFTEETDYTGQFRAGLEFNYPGLKIAKLPAKMSVSDLKEVFSTDDVISLEDEDEVFLPGVYFEDGAMLGIVYHEFLRRIDFQGDLSASGLKAQGETLVAEGVLPPESREMLDFTKIARIFATPLGQRILRAREIYPEFPFTLGVKAGEIYPEATGFSEKILVRGVIDLLALEEDGFFIVDWKTDRVTGDILNERLKEYAGQLNLYARAVEEITGKKVKEKYLYFINLEKEVRV.

Residues 2 to 451 enclose the UvrD-like helicase ATP-binding domain; sequence KNWTAEQMRA…IELSLNFRSR (450 aa). 23–30 serves as a coordination point for ATP; it reads AAAGAGKT. A UvrD-like helicase C-terminal domain is found at 478-768; that stretch reads KAFLKKGADY…RVMSVHKSKG (291 aa).

Belongs to the helicase family. AddA subfamily. Heterodimer of AddA and AddB/RexB. Mg(2+) serves as cofactor.

It catalyses the reaction Couples ATP hydrolysis with the unwinding of duplex DNA by translocating in the 3'-5' direction.. The enzyme catalyses ATP + H2O = ADP + phosphate + H(+). In terms of biological role, the heterodimer acts as both an ATP-dependent DNA helicase and an ATP-dependent, dual-direction single-stranded exonuclease. Recognizes the chi site generating a DNA molecule suitable for the initiation of homologous recombination. The AddA nuclease domain is required for chi fragment generation; this subunit has the helicase and 3' -&gt; 5' nuclease activities. This chain is ATP-dependent helicase/nuclease subunit A, found in Carboxydothermus hydrogenoformans (strain ATCC BAA-161 / DSM 6008 / Z-2901).